Reading from the N-terminus, the 791-residue chain is Cullin-2 (791 aa).

The 63-residue stretch at 722 to 784 folds into the Cullin neddylation domain; it reads DRKYYMECAI…KMYIQRTDQN (63 aa). Residue lysine 736 forms a Glycyl lysine isopeptide (Lys-Gly) (interchain with G-Cter in NEDD8) linkage.

Belongs to the cullin family. Component of multiple CBC (Cul2-ElonginB-ElonginC) E3 ubiquitin-protein ligase complexes formed of cul-2, elb-1, elc-1, rbx-1 and a variable substrate recognition component. Component of the CBC(fem-1) E3 ubiquitin-protein ligase complex with fem-1, fem-2 and fem-3. The CBC(fem-1) complex interacts with tra-1 and promotes tra-1 degradation. Probable component of the CBC(lrr-1) E3 ubiquitin-protein ligase complex incuding cul-2, elb-1, elc-1, rbx-1 and lrr-1. The CBC(lrr-1) complex interacts with the DNA replisome complex at the end of S phase; the interaction promotes the release of components of the CMG helicase complex (a component of the replisome) from chromatin. Probable component of an CBC(zif-1) E3 ubiquitin-protein ligase including cul-2, elc-1, rbx-1 and zif-1. Part of an E3 ubiquitin-protein ligase complex including cul-2, elc-1 and zyg-11. Interacts with Skp1-related protein skr-10. In terms of processing, neddylated; which enhances the ubiquitination activity of CBC (Cul2-ElonginB-ElonginC) E3 ubiquitin-protein ligase complexes. In adults, highly expressed in meiotic cells and oocytes. In larvae, expressed in many proliferating cell types: P cells during the L1 stage; seam cells when they divide at every molt; vulval and somatic gonad cells in late L3 and L4 stages; and intestinal cells throughout larval development.

Its subcellular location is the cytoplasm. It is found in the nucleus. The protein operates within protein modification; protein ubiquitination. Core component of multiple cullin-RING-based CBC (Cul2-ElonginB-ElonginC) E3 ubiquitin-protein ligase complexes which mediate the ubiquitination and subsequent proteasomal degradation of target proteins. As a scaffold protein may contribute to catalysis through positioning of the substrate and the ubiquitin-conjugating enzyme. The functional specificity of the CBC complex depends on the variable substrate recognition component. May function in ubiquitin-mediated degradation of CKIs to target cki-1 for degradation. CBC(zif-1) may ensure germline precursor cell asymmetry by targeting germline proteins for destruction if expressed in non-germline cells. As part of the CBC(fem-1) complex directs ubiquitination of tra-1. As part of the CBC(lrr-1) complex, required for the ubiquitination and dissasembly of the CMG helicase complex from chromatin at the end of DNA replication. Positive cell-cycle regulator that is required at two distinct points in the cell cycle; the G1-to-S-phase transition and mitosis. Also required for proper cytoskeletal movement and mitotic chromosome condensation. The protein is Cullin-2 of Caenorhabditis elegans.